Reading from the N-terminus, the 231-residue chain is 2-hydroxy-3-keto-5-methylthiopentenyl-1-phosphate phosphatase (231 aa).

The protein belongs to the HAD-like hydrolase superfamily. MtnX family.

The catalysed reaction is 2-hydroxy-5-methylsulfanyl-3-oxopent-1-enyl phosphate + H2O = 1,2-dihydroxy-5-(methylsulfanyl)pent-1-en-3-one + phosphate. It functions in the pathway amino-acid biosynthesis; L-methionine biosynthesis via salvage pathway; L-methionine from S-methyl-5-thio-alpha-D-ribose 1-phosphate: step 4/6. In terms of biological role, dephosphorylates 2-hydroxy-3-keto-5-methylthiopentenyl-1-phosphate (HK-MTPenyl-1-P) yielding 1,2-dihydroxy-3-keto-5-methylthiopentene (DHK-MTPene). The sequence is that of 2-hydroxy-3-keto-5-methylthiopentenyl-1-phosphate phosphatase from Bacillus pumilus (strain SAFR-032).